A 456-amino-acid chain; its full sequence is Aromatic amino acid transport protein AroP (456 aa).

Topologically, residues 1–18 (MEGQQHGEQLKRGLKNRH) are cytoplasmic. Residues 19–39 (IQLIALGGAIGTGLFLGSASV) traverse the membrane as a helical segment. The Periplasmic segment spans residues 40–41 (IQ). The helical transmembrane segment at 42–62 (SAGPGIILGYAIAGFIAFLIM) threads the bilayer. Topologically, residues 63-85 (RQLGEMVVEEPVAGSFSHFAYKY) are cytoplasmic. Residues 86 to 106 (WGSFAGFASGWNYWVLYVLVA) traverse the membrane as a helical segment. At 107-116 (MAELTAVGKY) the chain is on the periplasmic side. The helical transmembrane segment at 117–137 (IQFWYPEIPTWVSAAVFFVVI) threads the bilayer. Residues 138-154 (NAINLTNVKVFGEMEFW) are Cytoplasmic-facing. Residues 155 to 175 (FAIIKVIAVVAMIIFGAWLLF) traverse the membrane as a helical segment. Over 176 to 200 (SGNGGPQASVSNLWDQGGFLPHGFT) the chain is Periplasmic. A helical membrane pass occupies residues 201-221 (GLVMMMAIIMFSFGGLELVGI). Topologically, residues 222–239 (TAAEADNPEQSIPKATNQ) are cytoplasmic. A helical transmembrane segment spans residues 240-260 (VIYRILIFYIGSLAVLLSLMP). Residues 261 to 270 (WTRVTADTSP) lie on the Periplasmic side of the membrane. A helical membrane pass occupies residues 271 to 291 (FVLIFHELGDTFVANALNIVV). The Cytoplasmic segment spans residues 292 to 332 (LTAALSVYNSCVYCNSRMLFGLAQQGNAPKALASVDKRGVP). The helical transmembrane segment at 333–353 (VNTILVSALVTALCVLINYLA) threads the bilayer. Over 354 to 357 (PESA) the chain is Periplasmic. A helical membrane pass occupies residues 358 to 378 (FGLLMALVVSALVINWAMISL). Residues 379 to 398 (AHMKFRRAKQEQGVVTRFPA) lie on the Cytoplasmic side of the membrane. Residues 399–419 (LLYPLGNWICLLFMAAVLVIM) form a helical membrane-spanning segment. Residues 420-424 (LMTPG) are Periplasmic-facing. The chain crosses the membrane as a helical span at residues 425–445 (MAISVYLIPVWLIVLGIGYLF). Residues 446-456 (KEKTAKAVKAH) are Cytoplasmic-facing.

Belongs to the amino acid-polyamine-organocation (APC) superfamily. Amino acid transporter (AAT) (TC 2.A.3.1) family.

The protein resides in the cell inner membrane. It catalyses the reaction L-phenylalanine(in) + H(+)(in) = L-phenylalanine(out) + H(+)(out). It carries out the reaction L-tryptophan(in) + H(+)(in) = L-tryptophan(out) + H(+)(out). The catalysed reaction is L-tyrosine(in) + H(+)(in) = L-tyrosine(out) + H(+)(out). Its function is as follows. Permease that is involved in the active transport across the cytoplasmic membrane of all three aromatic amino acids, phenylalanine, tyrosine and tryptophan. This is Aromatic amino acid transport protein AroP (aroP) from Escherichia coli O6:H1 (strain CFT073 / ATCC 700928 / UPEC).